The primary structure comprises 341 residues: Phosphate acyltransferase (341 aa).

It belongs to the PlsX family. In terms of assembly, homodimer. Probably interacts with PlsY.

Its subcellular location is the cytoplasm. It carries out the reaction a fatty acyl-[ACP] + phosphate = an acyl phosphate + holo-[ACP]. It functions in the pathway lipid metabolism; phospholipid metabolism. Functionally, catalyzes the reversible formation of acyl-phosphate (acyl-PO(4)) from acyl-[acyl-carrier-protein] (acyl-ACP). This enzyme utilizes acyl-ACP as fatty acyl donor, but not acyl-CoA. The polypeptide is Phosphate acyltransferase (Vibrio cholerae serotype O1 (strain ATCC 39541 / Classical Ogawa 395 / O395)).